The chain runs to 506 residues: Glutamate--tRNA ligase (506 aa).

The 'HIGH' region signature appears at 29–39 (PSPTGTPHVGL). Positions 273–277 (KLSKR) match the 'KMSKS' region motif. Lysine 276 is a binding site for ATP.

Belongs to the class-I aminoacyl-tRNA synthetase family. Glutamate--tRNA ligase type 1 subfamily. As to quaternary structure, monomer.

The protein localises to the cytoplasm. The catalysed reaction is tRNA(Glu) + L-glutamate + ATP = L-glutamyl-tRNA(Glu) + AMP + diphosphate. In terms of biological role, catalyzes the attachment of glutamate to tRNA(Glu) in a two-step reaction: glutamate is first activated by ATP to form Glu-AMP and then transferred to the acceptor end of tRNA(Glu). This chain is Glutamate--tRNA ligase, found in Paenarthrobacter aurescens (strain TC1).